A 278-amino-acid polypeptide reads, in one-letter code: Rhomboid protease GlpG (278 aa).

6 consecutive transmembrane segments (helical) span residues 95 to 115, 143 to 163, 170 to 190, 192 to 212, 224 to 241, and 245 to 267; these read GPLT…MQIL, AFLH…WYLG, LGSG…GWAQ, LFSG…MGYC, LMLP…LVAG, and ILGM…LMAF. The active-site Nucleophile is serine 202. Histidine 255 is a catalytic residue.

This sequence belongs to the peptidase S54 family.

The protein localises to the cell inner membrane. It carries out the reaction Cleaves type-1 transmembrane domains using a catalytic dyad composed of serine and histidine that are contributed by different transmembrane domains.. Its function is as follows. Rhomboid-type serine protease that catalyzes intramembrane proteolysis. In Serratia proteamaculans (strain 568), this protein is Rhomboid protease GlpG.